The primary structure comprises 337 residues: Mannitol dehydrogenase (337 aa).

Zn(2+) is bound by residues Cys27, His49, Cys80, Cys83, Cys86, Cys94, and Cys143.

Belongs to the zinc-containing alcohol dehydrogenase family. The cofactor is Zn(2+).

The enzyme catalyses D-mannitol + NAD(+) = D-mannose + NADH + H(+). Its function is as follows. Oxidizes mannitol to mannose. Provides the initial step by which translocated mannitol is committed to central metabolism and, by regulating mannitol pool size, is important in regulating salt tolerance at the cellular level. The polypeptide is Mannitol dehydrogenase (ELI3) (Petroselinum crispum (Parsley)).